The chain runs to 150 residues: MNTLKMQRRIAAELLKCGENRVWIDPEKVDEVASAITREDIRRLIKEGVIRKKPIEGQSRYRARIRHEQKKKGRHRGPGSRKGKKTARMGKKELWIKTIRALRRELRKLKEQKKIDRKTYRMLYIRAKGGQFKNKHQLYLFLEEHGLLKK.

The interval 59-89 (SRYRARIRHEQKKKGRHRGPGSRKGKKTARM) is disordered. Basic residues predominate over residues 61–89 (YRARIRHEQKKKGRHRGPGSRKGKKTARM).

It belongs to the eukaryotic ribosomal protein eL19 family. As to quaternary structure, part of the 50S ribosomal subunit.

Binds to the 23S rRNA. In Pyrococcus horikoshii (strain ATCC 700860 / DSM 12428 / JCM 9974 / NBRC 100139 / OT-3), this protein is Large ribosomal subunit protein eL19.